Reading from the N-terminus, the 80-residue chain is Pre-core protein X (80 aa).

The propeptide occupies 2 to 32; sequence ALTCRLRFPVPGFRGRMHRRRGMAGHGLTGG. A disordered region spans residues 18–45; that stretch reads MHRRRGMAGHGLTGGMRRAHHRRRRASH. Over residues 34–45 the composition is skewed to basic residues; it reads RRAHHRRRRASH. A propeptide spanning residues 52 to 80 is cleaved from the precursor; it reads ILPLLIPLIAAAIGAVPGIASVALQAQRH.

Belongs to the adenoviridae core protein X family. As to quaternary structure, interacts with the core-capsid bridging protein; this interaction bridges the virus core to the capsid. Cleaved by the viral protease during virion maturation to form the mature protein.

The protein resides in the host nucleus. The protein localises to the host nucleolus. It localises to the virion. Interacts with the viral DNA and aids in tightly condensing it within the capsid. Cleavage of pre-core protein X may serve to partially relax this structure within the mature virion prior to its entry into the nucleus. In Human adenovirus C serotype 2 (HAdV-2), this protein is Pre-core protein X.